Consider the following 200-residue polypeptide: Probable nicotinate-nucleotide adenylyltransferase (200 aa).

This sequence belongs to the NadD family.

It catalyses the reaction nicotinate beta-D-ribonucleotide + ATP + H(+) = deamido-NAD(+) + diphosphate. It participates in cofactor biosynthesis; NAD(+) biosynthesis; deamido-NAD(+) from nicotinate D-ribonucleotide: step 1/1. Its function is as follows. Catalyzes the reversible adenylation of nicotinate mononucleotide (NaMN) to nicotinic acid adenine dinucleotide (NaAD). The polypeptide is Probable nicotinate-nucleotide adenylyltransferase (Leifsonia xyli subsp. xyli (strain CTCB07)).